An 875-amino-acid polypeptide reads, in one-letter code: Neurotrypsin (875 aa).

Residues 1–20 form the signal peptide; the sequence is MTLARFVLALVLGALPEVVG. The N-linked (GlcNAc...) asparagine glycan is linked to Asn26. The disordered stretch occupies residues 30 to 87; it reads HHRHRHSPPPGPQYPYYLPTHQRPPRTRPPPPLPRFPRPPRALPAQRPHALQAGHTPR. Positions 56–71 are enriched in pro residues; sequence TRPPPPLPRFPRPPRA. The 73-residue stretch at 93 to 165 folds into the Kringle domain; it reads CPAGELWVSV…GKVDWGYCDC (73 aa). Disulfide bonds link Cys93/Cys165, Cys109/Cys149, Cys138/Cys163, Cys195/Cys259, Cys208/Cys269, Cys239/Cys249, Cys305/Cys369, Cys318/Cys379, Cys349/Cys359, Cys412/Cys475, Cys425/Cys485, Cys455/Cys465, Cys525/Cys589, Cys538/Cys599, Cys569/Cys579, Cys619/Cys750, Cys661/Cys677, Cys765/Cys831, Cys794/Cys808, and Cys821/Cys850. SRCR domains are found at residues 170–271, 280–381, 387–487, and 500–601; these read VRLR…TCSF, IRLV…SCTP, IRLA…ACYP, and VRLM…ICDY. The interval 619 to 630 is zymogen activation region; sequence CGLRLLHRRQKR. The 244-residue stretch at 631–874 folds into the Peptidase S1 domain; it reads IIGGKNSLRG…FVPWIKSVTK (244 aa). His676 acts as the Charge relay system in catalysis. N-linked (GlcNAc...) asparagine glycosylation occurs at Asn683. Asp726 serves as the catalytic Charge relay system. Residue Ser825 is the Charge relay system of the active site.

The protein belongs to the peptidase S1 family.

It is found in the secreted. Plays a role in neuronal plasticity and the proteolytic action may subserve structural reorganizations associated with learning and memory operations. The polypeptide is Neurotrypsin (PRSS12) (Macaca mulatta (Rhesus macaque)).